Reading from the N-terminus, the 591-residue chain is MRLFSHLAVLAILACAVPITAIPSFLSNSYPAHPAEGISLFPQTQPQAPLGLWTRLRNTVIERLWRVPPQLCKNRPGHKGKFPLFSAPASLRARYGDDVVLRFTIRNAEEVKALAEASNILFLDVWASTDEWVDIRLSKDVVPSLLGLLPKSLQTSHIPLIHDLPQTIYESYPSSSQRSSYDVQGFSPSTKHSSDKTNIFFQDYQPFSVIVPWMRLLTSMFSSHVQMINIGSTFEGRDIPALQIGVWPANNPKPRKTVVVSGGSHAREWISVSTVNYVAYSLITNYAKSKHVAELLQQFDFIFIPTLNPDGYIYTWEVDRIWRKNRQDTSLPFCPGVDLDRTWGFKWDGNITADNPCSESYPGEDPFAGIEAKQFSQWAKNQTAQNNTEFVAFIDLHSYSQQIRYPYSYSCQPDPPNLENLEELAIGIAKAIRLTNRETYEVSSACEGLMASQAKVKSDDPFPRIERTGGSALDWFYHDLNVKYSYQIKLRDRGSYGFLLPRENIVPTGQEMFNAVMVLGRFLSGHDGFGPLDWEDESQRPKADEDDIPSENELDENDDSWIPYDYRNHDDQNEGEGYDNDEWGFRRRRKR.

A signal peptide spans 1–21 (MRLFSHLAVLAILACAVPITA). Positions 22-175 (IPSFLSNSYP…QTIYESYPSS (154 aa)) are excised as a propeptide. A Peptidase M14 domain is found at 203 to 523 (DYQPFSVIVP…NAVMVLGRFL (321 aa)). Residues histidine 265 and glutamate 268 each contribute to the Zn(2+) site. Substrate contacts are provided by residues 265–268 (HARE), arginine 323, and 340–341 (DR). A disulfide bridge links cysteine 334 with cysteine 357. N-linked (GlcNAc...) asparagine glycosylation is found at asparagine 350, asparagine 381, and asparagine 386. Histidine 397 lines the Zn(2+) pocket. Substrate is bound at residue 398-399 (SY). The disordered stretch occupies residues 533 to 591 (DWEDESQRPKADEDDIPSENELDENDDSWIPYDYRNHDDQNEGEGYDNDEWGFRRRRKR). 2 stretches are compositionally biased toward acidic residues: residues 544-559 (DEDD…ENDD) and 573-582 (NEGEGYDNDE).

Belongs to the peptidase M14 family. The cofactor is Zn(2+).

The protein localises to the vacuole. The protein resides in the secreted. Its function is as follows. Inactive carboxypeptidase that may play a role in cell wall organization and biogenesis. The protein is Inactive metallocarboxypeptidase ECM14 (ECM14) of Paracoccidioides brasiliensis (strain Pb18).